A 201-amino-acid chain; its full sequence is UPF0301 protein ROP_34500 (201 aa).

Belongs to the UPF0301 (AlgH) family.

This is UPF0301 protein ROP_34500 from Rhodococcus opacus (strain B4).